The sequence spans 486 residues: MKFFDITVTELHQKLVDKELTVTELVSETLDQIEADQKVLNDFVTINREGALAQARAIDEKGINPDNIWAGIPIAIKDNIVTKGIKTTAASKMLSNFTPIYDATVIERLQANDVIIIGKTNMDEFAMGGSTETSYFGDTRNPWDHTKVPGGSSGGSATTVSAGNSIAALGSDTGGSIRQPASYTGIVGVKPTYGRISRYGLIAFGSSLDQIGPMTRTVKDNAALLNIIAGMDERDLTSSDKKVPDFTSKIGKDIKGMKIGLPKEYLGDGINEDVKKVVRQAVETLTNLGATIEEISLPRSKYGVAAYYIIGSSEASSNLQRFDGIRYGHRAQDVKNLEDVYVKSRSEGFGDEVKRRIMLGTYSLSAGTYDAYFKKAAQVRTLIINDFNKIFEDYDLIIGPTAPTPAYAIGAEVDDPTTMYMNDVLTIPVNLAGLPAMSVPAGFSDNMPVGLQIIAKPFDEETMYQAGAAFEAATEVHSKHPEMEDK.

Active-site charge relay system residues include Lys-77 and Ser-152. The active-site Acyl-ester intermediate is Ser-176.

Belongs to the amidase family. GatA subfamily. Heterotrimer of A, B and C subunits.

The enzyme catalyses L-glutamyl-tRNA(Gln) + L-glutamine + ATP + H2O = L-glutaminyl-tRNA(Gln) + L-glutamate + ADP + phosphate + H(+). Its function is as follows. Allows the formation of correctly charged Gln-tRNA(Gln) through the transamidation of misacylated Glu-tRNA(Gln) in organisms which lack glutaminyl-tRNA synthetase. The reaction takes place in the presence of glutamine and ATP through an activated gamma-phospho-Glu-tRNA(Gln). In Pediococcus pentosaceus (strain ATCC 25745 / CCUG 21536 / LMG 10740 / 183-1w), this protein is Glutamyl-tRNA(Gln) amidotransferase subunit A.